The following is a 229-amino-acid chain: Ribonuclease T (229 aa).

One can recognise an Exonuclease domain in the interval 23–197 (VIIDVETAGF…YDTERTAKLF (175 aa)). Aspartate 26, glutamate 28, histidine 184, and aspartate 189 together coordinate Mg(2+). Histidine 184 serves as the catalytic Proton donor/acceptor.

Belongs to the RNase T family. As to quaternary structure, homodimer. Mg(2+) is required as a cofactor.

In terms of biological role, trims short 3' overhangs of a variety of RNA species, leaving a one or two nucleotide 3' overhang. Responsible for the end-turnover of tRNA: specifically removes the terminal AMP residue from uncharged tRNA (tRNA-C-C-A). Also appears to be involved in tRNA biosynthesis. The sequence is that of Ribonuclease T from Haemophilus influenzae (strain PittGG).